The following is a 291-amino-acid chain: MEAPASAQTPHPHEPISFGIDQILNSPDQDSAPAPRGPDGASYLGGPPGGRPGATYPSLPASFAGLGAPFEDAGSYSVNLSLAPAGVIRVPAHRPLPGAVPPPLPSALPAMPSVPTVSSLGGLNFPWMESSRRFVKDRFTAAAALTPFTVTRRIGHPYQNRTPPKRKKPRTSFSRVQICELEKRFHRQKYLASAERAALAKSLKMTDAQVKTWFQNRRTKWRRQTAEEREAERQQASRLMLQLQHDAFQKSLNDSIQPDPLCLHNSSLFALQNLQPWEEDSSKVPAVTSLV.

Positions 1 to 56 are disordered; that stretch reads MEAPASAQTPHPHEPISFGIDQILNSPDQDSAPAPRGPDGASYLGGPPGGRPGATY. The segment at residues 166 to 225 is a DNA-binding region (homeobox); sequence RKKPRTSFSRVQICELEKRFHRQKYLASAERAALAKSLKMTDAQVKTWFQNRRTKWRRQT.

It localises to the nucleus. In Homo sapiens (Human), this protein is T-cell leukemia homeobox protein 3 (TLX3).